Here is a 503-residue protein sequence, read N- to C-terminus: Na(+)-translocating NADH-quinone reductase subunit B (503 aa).

5 helical membrane-spanning segments follow: residues 55–75 (MMLV…NSGV), 94–114 (ISGF…FSIL), 120–140 (IFLP…VLFA), 161–181 (TLPP…GVVV), and 186–206 (FGGT…FLFF). Threonine 248 is modified (FMN phosphoryl threonine). Transmembrane regions (helical) follow at residues 361–381 (TSTF…IASW), 387–407 (FGIG…LIVG), 417–437 (FFIP…LVFM), 452–472 (WIYG…NPAY), and 475–495 (GVML…YFAV).

It belongs to the NqrB/RnfD family. Composed of six subunits; NqrA, NqrB, NqrC, NqrD, NqrE and NqrF. Requires FMN as cofactor.

The protein resides in the cell inner membrane. It carries out the reaction a ubiquinone + n Na(+)(in) + NADH + H(+) = a ubiquinol + n Na(+)(out) + NAD(+). Its function is as follows. NQR complex catalyzes the reduction of ubiquinone-1 to ubiquinol by two successive reactions, coupled with the transport of Na(+) ions from the cytoplasm to the periplasm. NqrA to NqrE are probably involved in the second step, the conversion of ubisemiquinone to ubiquinol. The polypeptide is Na(+)-translocating NADH-quinone reductase subunit B (Chlamydia caviae (strain ATCC VR-813 / DSM 19441 / 03DC25 / GPIC) (Chlamydophila caviae)).